Reading from the N-terminus, the 375-residue chain is 4-hydroxy-3-methylbut-2-en-1-yl diphosphate synthase (flavodoxin) (375 aa).

4 residues coordinate [4Fe-4S] cluster: cysteine 270, cysteine 273, cysteine 305, and glutamate 312.

The protein belongs to the IspG family. Requires [4Fe-4S] cluster as cofactor.

The catalysed reaction is (2E)-4-hydroxy-3-methylbut-2-enyl diphosphate + oxidized [flavodoxin] + H2O + 2 H(+) = 2-C-methyl-D-erythritol 2,4-cyclic diphosphate + reduced [flavodoxin]. It functions in the pathway isoprenoid biosynthesis; isopentenyl diphosphate biosynthesis via DXP pathway; isopentenyl diphosphate from 1-deoxy-D-xylulose 5-phosphate: step 5/6. In terms of biological role, converts 2C-methyl-D-erythritol 2,4-cyclodiphosphate (ME-2,4cPP) into 1-hydroxy-2-methyl-2-(E)-butenyl 4-diphosphate. The protein is 4-hydroxy-3-methylbut-2-en-1-yl diphosphate synthase (flavodoxin) of Yersinia pseudotuberculosis serotype IB (strain PB1/+).